Consider the following 367-residue polypeptide: Ribosome-binding ATPase YchF (367 aa).

One can recognise an OBG-type G domain in the interval Leu-2–Leu-258. Asn-11–Thr-16 is an ATP binding site. Residues Ser-15 and Thr-35 each contribute to the Mg(2+) site. The region spanning Asn-281–Phe-364 is the TGS domain.

Belongs to the TRAFAC class OBG-HflX-like GTPase superfamily. OBG GTPase family. YchF/OLA1 subfamily. Requires Mg(2+) as cofactor.

ATPase that binds to both the 70S ribosome and the 50S ribosomal subunit in a nucleotide-independent manner. The polypeptide is Ribosome-binding ATPase YchF (Mycoplasma genitalium (strain ATCC 33530 / DSM 19775 / NCTC 10195 / G37) (Mycoplasmoides genitalium)).